The primary structure comprises 838 residues: Transforming acidic coiled-coil-containing protein 3 (838 aa).

At Ser-2 the chain carries N-acetylserine. Ser-25, Ser-39, and Ser-71 each carry phosphoserine. The tract at residues 123–227 is disordered; sequence EADTDLLGDA…HGAEEECKAE (105 aa). The span at 132–164 shows a compositional bias: low complexity; it reads ASPAFGSGSSSESGPGALADLDCSSSSQSPGSS. A phosphoserine mark is found at Ser-175 and Ser-177. Positions 204–227 are enriched in basic and acidic residues; that stretch reads DPCRTESQHKAETPHGAEEECKAE. Ser-250, Ser-317, and Ser-402 each carry phosphoserine. The disordered stretch occupies residues 311–527; the sequence is GRAMTLSPQE…LELKEESFRD (217 aa). The span at 403 to 412 shows a compositional bias: basic and acidic residues; the sequence is YHLDWDKMDD. Position 434 is a phosphoserine (Ser-434). A compositionally biased stretch (polar residues) spans 492-503; that stretch reads NSASTSLPTSCP. Positions 522–577 are necessary but not sufficient for spindle localization; that stretch reads EESFRDPAEVLGTGAEVDYLEQFGTSSFKESALRKQSLYLKFDPLLRDSPGRPVPV. The residue at position 558 (Ser-558) is a Phosphoserine; by AURKA. Positions 569 to 594 are disordered; the sequence is DSPGRPVPVATETSSMHGANETPSGR. Residues 579–591 are compositionally biased toward polar residues; the sequence is TETSSMHGANETP. The segment at 594–838 is necessary but not sufficient for spindle localization; sequence RPREAKLVEF…DDLISKMEKI (245 aa). The stretch at 637–837 forms a coiled coil; the sequence is LQYSQKDLDA…CDDLISKMEK (201 aa).

The protein belongs to the TACC family. Interacts with microtubules. Interacts with CKAP5 independently of clathrin. Interacts with CKAP5 and clathrin forming the TACC3/ch-TOG/clathrin complex located at spindle inter-microtubules bridges; TACC3 (phosphorylated at Ser-558 by AURKA) and CLTC are proposed to form a composite microtubule interaction surface. Interacts with CCDC100/CEP120. The coiled coil C-terminal region interacts with AH receptor nuclear translocator protein (ARNT) and ARNT2. Interacts with GCN5L2 and PCAF.

It localises to the cytoplasm. Its subcellular location is the cytoskeleton. The protein localises to the microtubule organizing center. It is found in the centrosome. The protein resides in the spindle. It localises to the spindle pole. Plays a role in the microtubule-dependent coupling of the nucleus and the centrosome. Involved in the processes that regulate centrosome-mediated interkinetic nuclear migration (INM) of neural progenitors. Acts as a component of the TACC3/ch-TOG/clathrin complex proposed to contribute to stabilization of kinetochore fibers of the mitotic spindle by acting as inter-microtubule bridge. The TACC3/ch-TOG/clathrin complex is required for the maintenance of kinetochore fiber tension. May be involved in the control of cell growth and differentiation. May contribute to cancer. The sequence is that of Transforming acidic coiled-coil-containing protein 3 (TACC3) from Homo sapiens (Human).